We begin with the raw amino-acid sequence, 221 residues long: Ribosomal RNA small subunit methyltransferase G (221 aa).

Residues glycine 83, phenylalanine 88, 132–133, and arginine 146 each bind S-adenosyl-L-methionine; that span reads LE.

It belongs to the methyltransferase superfamily. RNA methyltransferase RsmG family.

Its subcellular location is the cytoplasm. The enzyme catalyses guanosine(527) in 16S rRNA + S-adenosyl-L-methionine = N(7)-methylguanosine(527) in 16S rRNA + S-adenosyl-L-homocysteine. Its function is as follows. Specifically methylates the N7 position of guanine in position 527 of 16S rRNA. The sequence is that of Ribosomal RNA small subunit methyltransferase G from Zymomonas mobilis subsp. mobilis (strain ATCC 31821 / ZM4 / CP4).